The following is a 400-amino-acid chain: Phosphoglycerate kinase (400 aa).

Substrate is bound by residues 21-23, R36, 59-62, R114, and R147; these read DLN and HLGR. ATP contacts are provided by residues K202, E329, and 355-358; that span reads GGDT.

It belongs to the phosphoglycerate kinase family. Monomer.

It localises to the cytoplasm. The catalysed reaction is (2R)-3-phosphoglycerate + ATP = (2R)-3-phospho-glyceroyl phosphate + ADP. The protein operates within carbohydrate degradation; glycolysis; pyruvate from D-glyceraldehyde 3-phosphate: step 2/5. This is Phosphoglycerate kinase from Psychrobacter cryohalolentis (strain ATCC BAA-1226 / DSM 17306 / VKM B-2378 / K5).